We begin with the raw amino-acid sequence, 28 residues long: Metallothionein-like protein type 2 LSC210 (28 aa).

This sequence belongs to the metallothionein superfamily. Type 15 family.

In terms of biological role, metallothioneins have a high content of cysteine residues that bind various heavy metals. The polypeptide is Metallothionein-like protein type 2 LSC210 (LSC210) (Brassica napus (Rape)).